The chain runs to 121 residues: Small ribosomal subunit protein uS13 (121 aa).

The tract at residues 94 to 121 (GLPVRGQNTKNNARTRKGKAVAIAGKKK) is disordered. Basic residues predominate over residues 106–121 (ARTRKGKAVAIAGKKK).

It belongs to the universal ribosomal protein uS13 family. In terms of assembly, part of the 30S ribosomal subunit. Forms a loose heterodimer with protein S19. Forms two bridges to the 50S subunit in the 70S ribosome.

Located at the top of the head of the 30S subunit, it contacts several helices of the 16S rRNA. In the 70S ribosome it contacts the 23S rRNA (bridge B1a) and protein L5 of the 50S subunit (bridge B1b), connecting the 2 subunits; these bridges are implicated in subunit movement. Contacts the tRNAs in the A and P-sites. This is Small ribosomal subunit protein uS13 from Streptococcus sanguinis (strain SK36).